The following is a 473-amino-acid chain: Homeobox protein ATH1 (473 aa).

The SR/KY domain stretch occupies residues 205–221 (SKYLHSVQEILSHFAAY). Residues 266-336 (QRRALEAKKT…NLRERICKKI (71 aa)) form a BELL domain region. Residues 372-434 (IWRPQRGLPE…NARVRLWKPM (63 aa)) constitute a DNA-binding region (homeobox). The tract at residues 448–473 (NNSHIQPNGPTLRMPKSVMMSQAMHK) is disordered.

The protein belongs to the TALE/BELL homeobox family. May form heterodimeric complex with the TALE/KNOX protein STM. As to expression, most abundant in flowers.

The protein localises to the nucleus. Transcription factor which may be involved in the signal transduction pathway downstream of the COP1 gene. Controls floral competency as a specific activator of FLC expression. Is responsive of the nuclear import of SHOOT MERISTEMLESS (STM). This is Homeobox protein ATH1 (ATH1) from Arabidopsis thaliana (Mouse-ear cress).